The primary structure comprises 260 residues: Ribosomal RNA small subunit methyltransferase J (260 aa).

S-adenosyl-L-methionine contacts are provided by residues 125-126 (ER) and D179. A disordered region spans residues 234-260 (IDGPKPSHALDGKSSRYDIYPKKALKP). A compositionally biased stretch (basic and acidic residues) spans 241-254 (HALDGKSSRYDIYP).

It belongs to the methyltransferase superfamily. RsmJ family.

The protein resides in the cytoplasm. It catalyses the reaction guanosine(1516) in 16S rRNA + S-adenosyl-L-methionine = N(2)-methylguanosine(1516) in 16S rRNA + S-adenosyl-L-homocysteine + H(+). Its function is as follows. Specifically methylates the guanosine in position 1516 of 16S rRNA. This chain is Ribosomal RNA small subunit methyltransferase J, found in Pseudomonas fluorescens (strain SBW25).